The chain runs to 82 residues: Delta-actitoxin-Aeq2a (82 aa).

The N-terminal stretch at 1–19 (MNRLMILVFAAVFLALASA) is a signal peptide. The propeptide occupies 20-26 (DEDVDIA). Intrachain disulfides connect Cys-32–Cys-79, Cys-34–Cys-69, and Cys-62–Cys-80.

It belongs to the sea anemone sodium channel inhibitory toxin family. Type I subfamily.

The protein localises to the secreted. It is found in the nematocyst. Functionally, binds specifically to voltage-gated sodium channels (Nav), thereby delaying their inactivation during signal transduction. Causes death to crabs (minimum lethal dose of 25 ug/kg) and mice. This is Delta-actitoxin-Aeq2a from Actinia equina (Beadlet anemone).